The chain runs to 156 residues: Small ribosomal subunit protein uS7 (156 aa).

It belongs to the universal ribosomal protein uS7 family. Part of the 30S ribosomal subunit. Contacts proteins S9 and S11.

One of the primary rRNA binding proteins, it binds directly to 16S rRNA where it nucleates assembly of the head domain of the 30S subunit. Is located at the subunit interface close to the decoding center, probably blocks exit of the E-site tRNA. The protein is Small ribosomal subunit protein uS7 of Salmonella choleraesuis (strain SC-B67).